Here is an 846-residue protein sequence, read N- to C-terminus: Penicillin G acylase (846 aa).

The N-terminal stretch at 1–26 (MKNRNRMIVNCVTASLMYYWSLPALA) is a signal peptide. Glu-178 contributes to the Ca(2+) binding site. Residues 236–289 (ALLPRYDLPAPMLDRPAKGADGALLALTAGKNRETIAAQFAQGGANGLAGYPTT) constitute a propeptide, spacer peptide. The active-site Nucleophile is Ser-290. Ca(2+) contacts are provided by Asp-362, Val-364, Asp-365, Pro-494, and Asp-541.

It belongs to the peptidase S45 family. Heterodimer of an alpha subunit and a beta subunit processed from the same precursor. Ca(2+) serves as cofactor.

Its subcellular location is the periplasm. It carries out the reaction a penicillin + H2O = 6-aminopenicillanate + a carboxylate. This Escherichia coli protein is Penicillin G acylase (pac).